A 368-amino-acid polypeptide reads, in one-letter code: 3-isopropylmalate dehydrogenase (368 aa).

80–93 is an NAD(+) binding site; that stretch reads GPKWDNLEFSKKPE. Positions 100, 110, 138, and 229 each coordinate substrate. Residues aspartate 229, aspartate 253, and aspartate 257 each contribute to the Mg(2+) site. 292-304 is a binding site for NAD(+); it reads GSAPDIAGKEIAN.

Belongs to the isocitrate and isopropylmalate dehydrogenases family. LeuB type 1 subfamily. As to quaternary structure, homodimer. The cofactor is Mg(2+). Mn(2+) serves as cofactor.

Its subcellular location is the cytoplasm. The catalysed reaction is (2R,3S)-3-isopropylmalate + NAD(+) = 4-methyl-2-oxopentanoate + CO2 + NADH. It functions in the pathway amino-acid biosynthesis; L-leucine biosynthesis; L-leucine from 3-methyl-2-oxobutanoate: step 3/4. Functionally, catalyzes the oxidation of 3-carboxy-2-hydroxy-4-methylpentanoate (3-isopropylmalate) to 3-carboxy-4-methyl-2-oxopentanoate. The product decarboxylates to 4-methyl-2 oxopentanoate. The sequence is that of 3-isopropylmalate dehydrogenase from Pelagibacter ubique (strain HTCC1062).